A 207-amino-acid polypeptide reads, in one-letter code: MRLERVLEEARAKGYPIEDNGLGNLWVVLPRERFKEEMAHYKAMGFNFLADIVGLDYLTYPDPRPERFAVVYELVSLPGWKDGDGSRFFVRVYVPEEDPRLPTVTDLWGSANFLEREVYDLFGIVFEGHPDLRKILTPEDLEGHPLRKDYPLGETPTLFREGRYIIPAEFRAALTGKDPGLTFYKGGSRKGYRSLWADLKKAREVKG.

The protein belongs to the complex I 30 kDa subunit family. In terms of assembly, NDH-1 is composed of 14 different subunits. Subunits NuoB, C, D, E, F, and G constitute the peripheral sector of the complex.

The protein localises to the cell inner membrane. It catalyses the reaction a quinone + NADH + 5 H(+)(in) = a quinol + NAD(+) + 4 H(+)(out). Its function is as follows. NDH-1 shuttles electrons from NADH, via FMN and iron-sulfur (Fe-S) centers, to quinones in the respiratory chain. The immediate electron acceptor for the enzyme in this species is believed to be ubiquinone. Couples the redox reaction to proton translocation (for every two electrons transferred, four hydrogen ions are translocated across the cytoplasmic membrane), and thus conserves the redox energy in a proton gradient. The chain is NADH-quinone oxidoreductase subunit C from Thermus thermophilus (strain ATCC BAA-163 / DSM 7039 / HB27).